A 56-amino-acid polypeptide reads, in one-letter code: Large ribosomal subunit protein bL32 (56 aa).

Residues 1-16 are compositionally biased toward basic residues; that stretch reads MAVQKNKKSRSKRGMR. The tract at residues 1-36 is disordered; sequence MAVQKNKKSRSKRGMRRSHDSLSTPQLSVDSTSGEL. The span at 21 to 34 shows a compositional bias: polar residues; the sequence is SLSTPQLSVDSTSG.

Belongs to the bacterial ribosomal protein bL32 family.

The chain is Large ribosomal subunit protein bL32 from Shewanella sediminis (strain HAW-EB3).